A 445-amino-acid chain; its full sequence is Dolichyl-diphosphooligosaccharide--protein glycosyltransferase 48 kDa subunit (445 aa).

The N-terminal stretch at Met-1–Ala-20 is a signal peptide. The Lumenal portion of the chain corresponds to Asp-21–Pro-405. A helical membrane pass occupies residues Tyr-406–Tyr-426. At His-427–Asn-445 the chain is on the cytoplasmic side.

The protein belongs to the DDOST 48 kDa subunit family. As to quaternary structure, component of the oligosaccharyltransferase (OST) complex.

It is found in the endoplasmic reticulum membrane. It participates in protein modification; protein glycosylation. In terms of biological role, subunit of the oligosaccharyl transferase (OST) complex that catalyzes the initial transfer of a defined glycan (Glc(3)Man(9)GlcNAc(2) in eukaryotes) from the lipid carrier dolichol-pyrophosphate to an asparagine residue within an Asn-X-Ser/Thr consensus motif in nascent polypeptide chains, the first step in protein N-glycosylation. N-glycosylation occurs cotranslationally and the complex associates with the Sec61 complex at the channel-forming translocon complex that mediates protein translocation across the endoplasmic reticulum (ER). All subunits are required for a maximal enzyme activity. Required for the assembly of both SST3A- and SS3B-containing OST complexes. Required for normal lifespan. This is Dolichyl-diphosphooligosaccharide--protein glycosyltransferase 48 kDa subunit from Caenorhabditis elegans.